Here is a 183-residue protein sequence, read N- to C-terminus: uncharacterized protein (183 aa).

To A.muscaria DOPA 4,5-dioxygenase.

This is an uncharacterized protein from Botryotinia fuckeliana (Noble rot fungus).